The sequence spans 92 residues: Progonadoliberin-1 (92 aa).

Residues 1-23 (MKPIQKLLAGLILLTWCVEGCSS) form the signal peptide. Gln24 carries the pyrrolidone carboxylic acid modification. Gly33 bears the Glycine amide mark.

It belongs to the GnRH family. In terms of processing, the precursor is cleaved by ACE, which removes the Gly-Lys-Arg peptide at the C-terminus, leading to mature hormone. The mature form of Gonadoliberin-1 is also cleaved and degraded by ACE.

It localises to the secreted. Its function is as follows. Stimulates the secretion of gonadotropins; it stimulates the secretion of both luteinizing and follicle-stimulating hormones. This chain is Progonadoliberin-1 (GNRH1), found in Homo sapiens (Human).